Consider the following 238-residue polypeptide: Flagellar L-ring protein (238 aa).

The N-terminal stretch at 1–23 (MIKLFICQKKYYLTAIFLLTIQS) is a signal peptide. A lipid anchor (N-palmitoyl cysteine) is attached at cysteine 24. A lipid anchor (S-diacylglycerol cysteine) is attached at cysteine 24.

Belongs to the FlgH family. The basal body constitutes a major portion of the flagellar organelle and consists of four rings (L,P,S, and M) mounted on a central rod.

It localises to the cell outer membrane. It is found in the bacterial flagellum basal body. Functionally, assembles around the rod to form the L-ring and probably protects the motor/basal body from shearing forces during rotation. The polypeptide is Flagellar L-ring protein (Buchnera aphidicola subsp. Acyrthosiphon pisum (strain 5A)).